A 674-amino-acid polypeptide reads, in one-letter code: Carbon monoxide dehydrogenase/acetyl-CoA synthase subunit beta (674 aa).

Positions 1–25 (MPRFRDLSHNCRPSEAPRVMEPKNR) are disordered. Residues C59, C67, C68, C71, C76, and C90 each contribute to the [4Fe-4S] cluster site. [Ni-4Fe-4S] cluster contacts are provided by H283, C317, C355, C470, C500, and C550.

As to quaternary structure, tetramer of two alpha and two beta chains. The cofactor is [Ni-Fe-S] cluster. [4Fe-4S] cluster is required as a cofactor.

It carries out the reaction CO + 2 oxidized [2Fe-2S]-[ferredoxin] + H2O = 2 reduced [2Fe-2S]-[ferredoxin] + CO2 + 2 H(+). Its function is as follows. The beta subunit (this protein) generates CO from CO(2), while the alpha subunit combines the CO with CoA and a methyl group to form acetyl-CoA. The methyl group, which is incorporated into acetyl-CoA, is transferred to the alpha subunit by a corrinoid iron-sulfur protein. This chain is Carbon monoxide dehydrogenase/acetyl-CoA synthase subunit beta, found in Moorella thermoacetica (Clostridium thermoaceticum).